A 777-amino-acid chain; its full sequence is Lon protease (777 aa).

The Lon N-terminal domain occupies I11–I204. G356–T363 is a binding site for ATP. Residues T592–K773 form the Lon proteolytic domain. Catalysis depends on residues S679 and K722.

This sequence belongs to the peptidase S16 family. As to quaternary structure, homohexamer. Organized in a ring with a central cavity.

It localises to the cytoplasm. The catalysed reaction is Hydrolysis of proteins in presence of ATP.. In terms of biological role, ATP-dependent serine protease that mediates the selective degradation of mutant and abnormal proteins as well as certain short-lived regulatory proteins. Required for cellular homeostasis and for survival from DNA damage and developmental changes induced by stress. Degrades polypeptides processively to yield small peptide fragments that are 5 to 10 amino acids long. Binds to DNA in a double-stranded, site-specific manner. This Buchnera aphidicola subsp. Acyrthosiphon pisum (strain APS) (Acyrthosiphon pisum symbiotic bacterium) protein is Lon protease.